A 1462-amino-acid polypeptide reads, in one-letter code: Gag-Pro-Pol polyprotein (1462 aa).

The N-myristoyl glycine; by host moiety is linked to residue G2. The segment at 93-142 (QIPSRPAPPPPSSSTHDPPDSDPQIPPPYVEPTAPQVLPVMHPHGAPPNH) is disordered. Residue S105 is modified to Phosphoserine; by host MAPK1. The PPXY motif signature appears at 118 to 121 (PPPY). The short motif at 124 to 127 (PTAP) is the PTAP/PSAP motif element. CCHC-type zinc fingers lie at residues 355–372 (QPCFRCGKAGHWSRDCTQ) and 378–395 (GPCPLCQDPTHWKRDCPR). The 79-residue stretch at 476–554 (IEALLDTGAD…NNWAIIGRDA (79 aa)) folds into the Peptidase A2 domain. The Protease; shared with dimeric partner role is filled by D481. The region spanning 614 to 804 (LEAGHIEPYT…GTIKFLGQII (191 aa)) is the Reverse transcriptase domain. Positions 680, 755, 756, 1040, 1074, 1096, 1157, 1230, and 1287 each coordinate Mg(2+). Residues 1031–1165 (INTAPCLFSD…TDALLITPVL (135 aa)) form the RNase H type-1 domain. Residues 1219–1388 (RGLLPNHIWQ…QPIPETHSLS (170 aa)) form the Integrase catalytic domain. A DNA-binding region (integrase-type) is located at residues 1393–1443 (HWYYFKLPGLNSRQWKGPQEALQEAAGAALIPVSASSAQWIPWRLLKRAAC).

Homodimer; the homodimers are part of the immature particles. Interacts with human TSG101 and NEDD4; these interactions are essential for budding and release of viral particles. As to quaternary structure, homodimer; further assembles as homohexamers. It depends on Mg(2+) as a cofactor. In terms of processing, phosphorylation of the matrix protein p19 by MAPK1 seems to play a role in budding. Myristoylated. Myristoylation of the matrix (MA) domain mediates the transport and binding of Gag polyproteins to the host plasma membrane and is required for the assembly of viral particles. Post-translationally, specific enzymatic cleavages by the viral protease yield mature proteins. The polyprotein is cleaved during and after budding, this process is termed maturation. The protease is autoproteolytically processed at its N- and C-termini.

It localises to the virion. It catalyses the reaction Endonucleolytic cleavage to 5'-phosphomonoester.. The enzyme catalyses DNA(n) + a 2'-deoxyribonucleoside 5'-triphosphate = DNA(n+1) + diphosphate. Functionally, the matrix domain targets Gag, Gag-Pro and Gag-Pro-Pol polyproteins to the plasma membrane via a multipartite membrane binding signal, that includes its myristoylated N-terminus. In terms of biological role, matrix protein. Forms the spherical core of the virus that encapsulates the genomic RNA-nucleocapsid complex. Its function is as follows. Binds strongly to viral nucleic acids and promote their aggregation. Also destabilizes the nucleic acids duplexes via highly structured zinc-binding motifs. Functionally, the aspartyl protease mediates proteolytic cleavages of Gag and Gag-Pol polyproteins during or shortly after the release of the virion from the plasma membrane. Cleavages take place as an ordered, step-wise cascade to yield mature proteins. This process is called maturation. Displays maximal activity during the budding process just prior to particle release from the cell (Potential). Cleaves the translation initiation factor eIF4G leading to the inhibition of host cap-dependent translation. In terms of biological role, RT is a multifunctional enzyme that converts the viral RNA genome into dsDNA in the cytoplasm, shortly after virus entry into the cell. This enzyme displays a DNA polymerase activity that can copy either DNA or RNA templates, and a ribonuclease H (RNase H) activity that cleaves the RNA strand of RNA-DNA heteroduplexes in a partially processive 3' to 5'-endonucleasic mode. Conversion of viral genomic RNA into dsDNA requires many steps. A tRNA-Pro binds to the primer-binding site (PBS) situated at the 5'-end of the viral RNA. RT uses the 3' end of the tRNA primer to perform a short round of RNA-dependent minus-strand DNA synthesis. The reading proceeds through the U5 region and ends after the repeated (R) region which is present at both ends of viral RNA. The portion of the RNA-DNA heteroduplex is digested by the RNase H, resulting in a ssDNA product attached to the tRNA primer. This ssDNA/tRNA hybridizes with the identical R region situated at the 3' end of viral RNA. This template exchange, known as minus-strand DNA strong stop transfer, can be either intra- or intermolecular. RT uses the 3' end of this newly synthesized short ssDNA to perform the RNA-dependent minus-strand DNA synthesis of the whole template. RNase H digests the RNA template except for a polypurine tract (PPT) situated at the 5' end of the genome. It is not clear if both polymerase and RNase H activities are simultaneous. RNase H probably can proceed both in a polymerase-dependent (RNA cut into small fragments by the same RT performing DNA synthesis) and a polymerase-independent mode (cleavage of remaining RNA fragments by free RTs). Secondly, RT performs DNA-directed plus-strand DNA synthesis using the PPT that has not been removed by RNase H as primer. PPT and tRNA primers are then removed by RNase H. The 3' and 5' ssDNA PBS regions hybridize to form a circular dsDNA intermediate. Strand displacement synthesis by RT to the PBS and PPT ends produces a blunt ended, linear dsDNA copy of the viral genome that includes long terminal repeats (LTRs) at both ends. Catalyzes viral DNA integration into the host chromosome, by performing a series of DNA cutting and joining reactions. This Human T-cell leukemia virus 1 (isolate Caribbea HS-35 subtype A) (HTLV-1) protein is Gag-Pro-Pol polyprotein (gag-pro-pol).